A 212-amino-acid chain; its full sequence is NAD(P)H-hydrate epimerase (212 aa).

The YjeF N-terminal domain occupies 10–212 (MRSLERAAIA…IGVIVKPIGL (203 aa)). 65–69 (NNGGD) is a (6S)-NADPHX binding site. K(+) is bound by residues Asn-66 and Asp-129. (6S)-NADPHX-binding positions include 133–139 (GLGLTRP) and Asp-161. Residue Ser-164 participates in K(+) binding.

Belongs to the NnrE/AIBP family. Requires K(+) as cofactor.

It carries out the reaction (6R)-NADHX = (6S)-NADHX. It catalyses the reaction (6R)-NADPHX = (6S)-NADPHX. In terms of biological role, catalyzes the epimerization of the S- and R-forms of NAD(P)HX, a damaged form of NAD(P)H that is a result of enzymatic or heat-dependent hydration. This is a prerequisite for the S-specific NAD(P)H-hydrate dehydratase to allow the repair of both epimers of NAD(P)HX. The sequence is that of NAD(P)H-hydrate epimerase from Rhodobacter capsulatus (strain ATCC BAA-309 / NBRC 16581 / SB1003).